A 95-amino-acid polypeptide reads, in one-letter code: Glutamine synthetase and cystathionine beta-lyase binding protein (95 aa).

Interacts with glutamine synthetase (TTHA1329) and cystathionine beta-lyase (TTHA1620), but proteins do not form a ternary complex.

In terms of biological role, binds to glutamine synthetase and cystathionine beta-lyase. May be utilized for the efficient use of nitrogen in the global nitrogen regulation of T.thermophilus. This Thermus thermophilus (strain ATCC 27634 / DSM 579 / HB8) protein is Glutamine synthetase and cystathionine beta-lyase binding protein.